Here is an 891-residue protein sequence, read N- to C-terminus: Alanine--tRNA ligase (891 aa).

The Zn(2+) site is built by histidine 576, histidine 580, cysteine 684, and histidine 688.

It belongs to the class-II aminoacyl-tRNA synthetase family. Zn(2+) is required as a cofactor.

It is found in the cytoplasm. It carries out the reaction tRNA(Ala) + L-alanine + ATP = L-alanyl-tRNA(Ala) + AMP + diphosphate. Catalyzes the attachment of alanine to tRNA(Ala) in a two-step reaction: alanine is first activated by ATP to form Ala-AMP and then transferred to the acceptor end of tRNA(Ala). Also edits incorrectly charged Ser-tRNA(Ala) and Gly-tRNA(Ala) via its editing domain. This Orientia tsutsugamushi (strain Boryong) (Rickettsia tsutsugamushi) protein is Alanine--tRNA ligase.